A 1324-amino-acid polypeptide reads, in one-letter code: Sal-like protein 1 (1324 aa).

A disordered region spans residues 1 to 42 (MSRRKQAKPQHFQSDPEVASLPRRDGDTEKGQPSRPTKSKDA). Positions 22–42 (PRRDGDTEKGQPSRPTKSKDA) are enriched in basic and acidic residues. The segment at 43–65 (HVCGRCCAEFFELSDLLLHKKNC) adopts a C2H2-type 1; atypical zinc-finger fold. Disordered regions lie at residues 77–102 (NPAS…NDTV), 108–127 (VDCS…SMEV), 132–172 (ANKS…TSAI), and 317–336 (PPIQ…SNSG). Residues 113–124 (LSEHNGLDREES) show a composition bias toward basic and acidic residues. Residues 135–158 (SGSGTSSGSHSSTAPSSSSSSSSS) show a composition bias toward low complexity. Polar residues predominate over residues 321–336 (LPQSSSGNTIIPSNSG). Residue Lys439 forms a Glycyl lysine isopeptide (Lys-Gly) (interchain with G-Cter in SUMO2) linkage. 2 consecutive C2H2-type zinc fingers follow at residues 449–471 (HKCR…LRSH) and 477–499 (FKCN…FQRH). Positions 577–646 (PIPISHSATS…ASSSVLSSPA (70 aa)) are disordered. Residues Ser590, Ser593, and Ser595 each carry the phosphoserine modification. The span at 633–646 (SVPTASSSVLSSPA) shows a compositional bias: low complexity. Residues Lys673, Lys690, and Lys701 each participate in a glycyl lysine isopeptide (Lys-Gly) (interchain with G-Cter in SUMO2) cross-link. C2H2-type zinc fingers lie at residues 706–728 (NECI…YRTH), 734–756 (FKCK…YSVH), and 766–788 (HSCP…IRMH). Disordered stretches follow at residues 790–856 (GGQI…SSPL) and 894–963 (EGDV…LSPT). Polar residues predominate over residues 802-811 (YSESMESDTG). Residues 820-833 (DLDNFSDENMEDCP) show a composition bias toward acidic residues. The segment covering 843 to 856 (SADASQDSLSSSPL) has biased composition (low complexity). A compositionally biased stretch (polar residues) spans 899–936 (TNDSSSVGGDMESQSAGSPAISESTSSMQALSPSNSTQ). A compositionally biased stretch (basic and acidic residues) spans 937-949 (EFHKSPSIEEKPQ). 2 positions are modified to phosphoserine: Ser941 and Ser943. Residues Lys947 and Lys982 each participate in a glycyl lysine isopeptide (Lys-Gly) (interchain with G-Cter in SUMO2) cross-link. 2 C2H2-type zinc fingers span residues 1001 to 1023 (TACD…YRSH) and 1029 to 1051 (FICT…MLTH). A Glycyl lysine isopeptide (Lys-Gly) (interchain with G-Cter in SUMO2) cross-link involves residue Lys1086. A disordered region spans residues 1095–1120 (VSPQDSKDTPTSHVPSGPLSSSATSP). The segment covering 1105–1119 (TSHVPSGPLSSSATS) has biased composition (polar residues). 2 C2H2-type zinc fingers span residues 1134-1156 (HYCN…ERTH) and 1162-1184 (FACT…MGTH). Residues Lys1219, Lys1299, and Lys1319 each participate in a glycyl lysine isopeptide (Lys-Gly) (interchain with G-Cter in SUMO2) cross-link.

The protein belongs to the sal C2H2-type zinc-finger protein family. May associate with NuRD histone deacetylase complex (HDAC). Interacts with components of HDAC complex including HDAC1, HDAC2, RBBP4, RBPP7, MTA1 and MTA2. Interacts with CCNQ. Interacts with NSD2 (via PHD-type zinc fingers 1, 2 and 3). As to expression, highest levels in kidney. Lower levels in adult brain (enriched in corpus callosum, lower expression in substantia nigra) and liver.

It is found in the nucleus. Functionally, transcriptional repressor involved in organogenesis. Plays an essential role in ureteric bud invasion during kidney development. The protein is Sal-like protein 1 (SALL1) of Homo sapiens (Human).